Reading from the N-terminus, the 504-residue chain is Protein anon-37Cs (504 aa).

As to expression, low levels seen in adult heads, thorax, abdomen and ovaries, high levels in testes.

Its subcellular location is the cytoplasm. Its function is as follows. Has a non-vital function. This chain is Protein anon-37Cs (anon-37Cs), found in Drosophila melanogaster (Fruit fly).